The following is a 91-amino-acid chain: UPF0250 protein PFLU_5418 (91 aa).

It belongs to the UPF0250 family.

This chain is UPF0250 protein PFLU_5418, found in Pseudomonas fluorescens (strain SBW25).